Here is a 554-residue protein sequence, read N- to C-terminus: ATP synthase subunit alpha (554 aa).

173–180 (GDRQTGKT) contacts ATP. The tract at residues 531–554 (SHLAAEKVRKHVPPSKPTTQRTAG) is disordered.

The protein belongs to the ATPase alpha/beta chains family. In terms of assembly, F-type ATPases have 2 components, CF(1) - the catalytic core - and CF(0) - the membrane proton channel. CF(1) has five subunits: alpha(3), beta(3), gamma(1), delta(1), epsilon(1). CF(0) has three main subunits: a(1), b(2) and c(9-12). The alpha and beta chains form an alternating ring which encloses part of the gamma chain. CF(1) is attached to CF(0) by a central stalk formed by the gamma and epsilon chains, while a peripheral stalk is formed by the delta and b chains.

Its subcellular location is the cell membrane. It catalyses the reaction ATP + H2O + 4 H(+)(in) = ADP + phosphate + 5 H(+)(out). Its function is as follows. Produces ATP from ADP in the presence of a proton gradient across the membrane. The alpha chain is a regulatory subunit. The polypeptide is ATP synthase subunit alpha (Acidothermus cellulolyticus (strain ATCC 43068 / DSM 8971 / 11B)).